Here is a 406-residue protein sequence, read N- to C-terminus: METLLLVQLFHELALKGKNRPFFLKRAKAHVRRALKGLGVALEGEWPMALLFRLPEEAWPEAKARLQDTLGVERFARVHRTPPDLEALKAALEKALEGQAFGSFRITAKRSDKAFPLTSPEIERALGAFVKGKTGAPVRLKGAEREFVVRVLPGAALLEVERHPGPGGLPPGVSGRVVALLSGGIDSPVAAYRLMRRGAEVVLVHFHPFPLLSGASREKAKALAERLARFQHRLRLHLVPFSEVQRHIIVEAPTAYRVVLYRRYMLRIAEAIAREEGALALCTGDSLGQVASQTLENLHAVNQAATLPVFRPLIGWDKEEIVAEAQRIGTYATSILPDEECCTLFAPKHPVTRARLEVVLETEARLPTEELLALALKEREVLTYTWPGKPLPEEPEGAFIMEHGPA.

The region spanning 60-162 is the THUMP domain; sequence PEAKARLQDT…PGAALLEVER (103 aa). ATP-binding positions include 180-181, 205-206, Arg262, Gly284, and Gln293; these read LL and HF.

The protein belongs to the ThiI family.

The protein resides in the cytoplasm. It carries out the reaction [ThiI sulfur-carrier protein]-S-sulfanyl-L-cysteine + a uridine in tRNA + 2 reduced [2Fe-2S]-[ferredoxin] + ATP + H(+) = [ThiI sulfur-carrier protein]-L-cysteine + a 4-thiouridine in tRNA + 2 oxidized [2Fe-2S]-[ferredoxin] + AMP + diphosphate. The enzyme catalyses [ThiS sulfur-carrier protein]-C-terminal Gly-Gly-AMP + S-sulfanyl-L-cysteinyl-[cysteine desulfurase] + AH2 = [ThiS sulfur-carrier protein]-C-terminal-Gly-aminoethanethioate + L-cysteinyl-[cysteine desulfurase] + A + AMP + 2 H(+). The protein operates within cofactor biosynthesis; thiamine diphosphate biosynthesis. Functionally, catalyzes the ATP-dependent transfer of a sulfur to tRNA to produce 4-thiouridine in position 8 of tRNAs, which functions as a near-UV photosensor. Also catalyzes the transfer of sulfur to the sulfur carrier protein ThiS, forming ThiS-thiocarboxylate. This is a step in the synthesis of thiazole, in the thiamine biosynthesis pathway. The sulfur is donated as persulfide by IscS. The sequence is that of Probable tRNA sulfurtransferase from Thermus thermophilus (strain ATCC 27634 / DSM 579 / HB8).